The chain runs to 210 residues: Imidazoleglycerol-phosphate dehydratase (210 aa).

It belongs to the imidazoleglycerol-phosphate dehydratase family.

The protein localises to the cytoplasm. It catalyses the reaction D-erythro-1-(imidazol-4-yl)glycerol 3-phosphate = 3-(imidazol-4-yl)-2-oxopropyl phosphate + H2O. It functions in the pathway amino-acid biosynthesis; L-histidine biosynthesis; L-histidine from 5-phospho-alpha-D-ribose 1-diphosphate: step 6/9. This is Imidazoleglycerol-phosphate dehydratase from Mycobacterium marinum (strain ATCC BAA-535 / M).